A 411-amino-acid chain; its full sequence is Putative BMP-2-inducible kinase-like protein (411 aa).

3 disordered regions span residues M1 to I87, S215 to Q280, and Q392 to Q411. Composition is skewed to basic and acidic residues over residues S8 to E18 and E53 to Y68. The stretch at E47 to M71 forms a coiled coil. Basic residues-rich tracts occupy residues V220–R234 and N243–L258.

This chain is Putative BMP-2-inducible kinase-like protein (BMP2KL), found in Homo sapiens (Human).